The following is a 478-amino-acid chain: Histidine--tRNA ligase (478 aa).

The protein belongs to the class-II aminoacyl-tRNA synthetase family. In terms of assembly, homodimer.

It is found in the cytoplasm. It carries out the reaction tRNA(His) + L-histidine + ATP = L-histidyl-tRNA(His) + AMP + diphosphate + H(+). The polypeptide is Histidine--tRNA ligase (hisS) (Xanthomonas axonopodis pv. citri (strain 306)).